We begin with the raw amino-acid sequence, 423 residues long: 5-hydroxytryptamine receptor 1A-alpha (423 aa).

The Extracellular segment spans residues 1–47 (MDLRATSSNDSNATSGYSDTAAVDWDEGENATGSGSLPDPELSYQII). N-linked (GlcNAc...) asparagine glycosylation is found at asparagine 9, asparagine 12, and asparagine 30. A helical transmembrane segment spans residues 48 to 68 (TSLFLGALILCSIFGNSCVVA). At 69-82 (AIALERSLQNVANY) the chain is on the cytoplasmic side. A helical membrane pass occupies residues 83 to 107 (LIGSLAVTDLMVSVLVLPMAALYQV). The Extracellular portion of the chain corresponds to 108-116 (LNKWTLGQD). Residues 117 to 141 (ICDLFIALDVLCCTSSILHLCAIAL) traverse the membrane as a helical segment. The cysteines at positions 118 and 196 are disulfide-linked. Serotonin contacts are provided by aspartate 125 and cysteine 129. The DRY motif; important for ligand-induced conformation changes motif lies at 142-144 (DRY). Residues 142–161 (DRYWAITDPIDYVNKRTPRR) are Cytoplasmic-facing. The helical transmembrane segment at 162–183 (AAVLISVTWLIGFSISIPPMLG) threads the bilayer. The Extracellular segment spans residues 184–202 (WRSAEDRANPDACIISQDP). A helical transmembrane segment spans residues 203 to 225 (GYTIYSTFGAFYIPLILMLVLYG). Residues 226 to 347 (RIFKAARFRI…LARERKTVKT (122 aa)) lie on the Cytoplasmic side of the membrane. The tract at residues 311 to 332 (LPLPNTPQSSSHENINEKTTGT) is disordered. Residues 316 to 329 (TPQSSSHENINEKT) show a composition bias toward polar residues. 1D-myo-inositol 4-phosphate contacts are provided by serine 320, lysine 346, threonine 347, and glycine 353. Residues 348–371 (LGIIMGTFIFCWLPFFIVALVLPF) traverse the membrane as a helical segment. The Extracellular portion of the chain corresponds to 372 to 379 (CAENCYMP). The chain crosses the membrane as a helical span at residues 380–404 (EWLGAVINWLGYSNSLLNPIIYAYF). The NPxxY motif; important for ligand-induced conformation changes and signaling motif lies at 397 to 401 (NPIIY). Phenylalanine 404, asparagine 405, and lysine 406 together coordinate 1D-myo-inositol 4-phosphate. Residues 405–423 (NKDFQSAFKKILRCKFHRH) are Cytoplasmic-facing.

It belongs to the G-protein coupled receptor 1 family. 5-hydroxytryptamine receptor subfamily.

It is found in the cell membrane. Its activity is regulated as follows. G-protein coupled receptor activity is regulated by lipids: phosphatidylinositol 4-phosphate increases HTR1A-mediated activity. Functionally, G-protein coupled receptor for 5-hydroxytryptamine (serotonin). Also functions as a receptor for various drugs and psychoactive substances. Ligand binding causes a conformation change that triggers signaling via guanine nucleotide-binding proteins (G proteins) and modulates the activity of downstream effectors, such as adenylate cyclase. HTR1A is coupled to G(i)/G(o) G alpha proteins and mediates inhibitory neurotransmission: signaling inhibits adenylate cyclase activity and activates a phosphatidylinositol-calcium second messenger system that regulates the release of Ca(2+) ions from intracellular stores. Beta-arrestin family members regulate signaling by mediating both receptor desensitization and resensitization processes. This is 5-hydroxytryptamine receptor 1A-alpha (htr1aa) from Takifugu rubripes (Japanese pufferfish).